A 999-amino-acid chain; its full sequence is Probable hemoglobin and hemoglobin-haptoglobin-binding protein 4 (999 aa).

The signal sequence occupies residues 1-24; sequence MTNFRLNVLAYSVMLGLTASVAYA. Residues 25 to 52 are disordered; sequence EPTNQPTNQPTNQPTNQPTNQPTNQNSN. Repeat copies occupy residues 26-29, 30-33, 34-37, 38-41, 42-45, and 46-49. Residues 26–49 are 6 X 4 AA tandem repeats of P-T-N-Q; it reads PTNQPTNQPTNQPTNQPTNQPTNQ. The segment covering 26-50 has biased composition (low complexity); sequence PTNQPTNQPTNQPTNQPTNQPTNQN. The short motif at 58-65 is the TonB box element; sequence EQINVLGS. In terms of domain architecture, TBDR plug spans 68-195; that stretch reads NNDNTPPKIA…LGGAVLFETK (128 aa). A TBDR beta-barrel domain is found at 203–999; that stretch reads EKDWHIGYKA…NYKLSAEITF (797 aa). The TonB C-terminal box motif lies at 982–999; the sequence is NRFYSPGRNYKLSAEITF.

The protein belongs to the TonB-dependent receptor family. Hemoglobin/haptoglobin binding protein subfamily.

It localises to the cell outer membrane. Its function is as follows. Acts as a receptor for hemoglobin or the hemoglobin/haptoglobin complex of the human host and is required for heme uptake. This is Probable hemoglobin and hemoglobin-haptoglobin-binding protein 4 from Haemophilus influenzae (strain ATCC 51907 / DSM 11121 / KW20 / Rd).